A 339-amino-acid chain; its full sequence is Ferrochelatase (339 aa).

H202 and E283 together coordinate Fe cation.

Belongs to the ferrochelatase family.

The protein localises to the cytoplasm. It catalyses the reaction heme b + 2 H(+) = protoporphyrin IX + Fe(2+). Its pathway is porphyrin-containing compound metabolism; protoheme biosynthesis; protoheme from protoporphyrin-IX: step 1/1. Functionally, catalyzes the ferrous insertion into protoporphyrin IX. In Psychrobacter sp. (strain PRwf-1), this protein is Ferrochelatase.